The sequence spans 209 residues: Rac-like GTP-binding protein ARAC9 (209 aa).

GTP is bound at residue 25–32 (GDGAVGKT). The short motif at 47–55 (YVPTVFDNF) is the Effector region element. GTP-binding positions include 72-76 (DTAGQ) and 130-133 (TKSD). Position 206 is a cysteine methyl ester (Cys206). Cys206 carries the S-geranylgeranyl cysteine lipid modification. Positions 207 to 209 (HVL) are cleaved as a propeptide — removed in mature form.

This sequence belongs to the small GTPase superfamily. Rho family. As to quaternary structure, interacts with SPK1.

The protein localises to the cytoplasm. It localises to the membrane. Inactive GDP-bound Rho GTPases reside in the cytosol, are found in a complex with Rho GDP-dissociation inhibitors (Rho GDIs), and are released from the GDI protein in order to translocate to membranes upon activation. The protein is Rac-like GTP-binding protein ARAC9 (ARAC9) of Arabidopsis thaliana (Mouse-ear cress).